Reading from the N-terminus, the 634-residue chain is Chaperone protein HtpG (634 aa).

The a; substrate-binding stretch occupies residues 1 to 342 (MTVETQKETL…SNDLSLNVSR (342 aa)). Positions 343–559 (EILQKDPIID…EQDLGLQMRQ (217 aa)) are b. Residues 560–634 (ILEASGQKVP…LNKLLVELSA (75 aa)) form a c region.

Belongs to the heat shock protein 90 family. Homodimer.

The protein localises to the cytoplasm. In terms of biological role, molecular chaperone. Has ATPase activity. The chain is Chaperone protein HtpG from Pseudomonas putida (strain ATCC 47054 / DSM 6125 / CFBP 8728 / NCIMB 11950 / KT2440).